The primary structure comprises 125 residues: Urotensin-2 (125 aa).

An N-terminal signal peptide occupies residues 1 to 20; that stretch reads MYKLASCCLLFIGFLNPLFS. Positions 21–111 are excised as a propeptide; the sequence is LPLLDSGEVS…HLLARIRKPY (91 aa). The cysteines at positions 119 and 124 are disulfide-linked.

This sequence belongs to the urotensin-2 family.

The protein resides in the secreted. Its function is as follows. Highly potent vasoconstrictor. The chain is Urotensin-2 (UTS2) from Macaca mulatta (Rhesus macaque).